Reading from the N-terminus, the 549-residue chain is Chaperonin GroEL (549 aa).

ATP contacts are provided by residues 29-32 (TAGP), K50, 86-90 (DGTTT), G418, and D499.

This sequence belongs to the chaperonin (HSP60) family. Forms a cylinder of 14 subunits composed of two heptameric rings stacked back-to-back. Interacts with the co-chaperonin GroES.

Its subcellular location is the cytoplasm. The enzyme catalyses ATP + H2O + a folded polypeptide = ADP + phosphate + an unfolded polypeptide.. In terms of biological role, together with its co-chaperonin GroES, plays an essential role in assisting protein folding. The GroEL-GroES system forms a nano-cage that allows encapsulation of the non-native substrate proteins and provides a physical environment optimized to promote and accelerate protein folding. The polypeptide is Chaperonin GroEL (Wolbachia pipientis wMel).